Here is a 1251-residue protein sequence, read N- to C-terminus: MANVRDSDTSLWLHNKLGTSNDSWINGSICSQLNKEVLRNIKECFPDLQTQVKLKLLLSFLHIPRRLVEEWKAELEEVIEVAGLDSELWVSMLAETMKTFPATSSLNTEISDYEDTRPIFIDMVNDLRKLVTKHSDLGMLPLECQYLNKNALISVVGQQPAPVKHFTLKRKPKSAQLRTELLHKSADAQSSLKKASAPTIPLRSRGMPRKMTDTTPLKGIPSRMPTTGFRSATVPGNAAQRPNLSRTPAGRKDGGIKLIEFTEQPLGYAAAKKRKREQQLEEQQKKQEQKQQQAAAAAAAAATAAASNAGDSSPTDAATASGGETPVTPTSANNSFEIKMEPQQLNQSAGSLEEPQDDEMSGKANMECDIETPEYATATLDFAQATSTSVADGQPGKPAVETKLKTPRTPKSAAKLNNNNNNNNNNSFNHTPKRIKQEIEIKSEEIIVPASIKLEKIETSPSTQRVSIQQQPPSLVQRTPHLLIRSSPQKRQNNGATTSAGTTTTTVGNTTIKMEKLDIKPMIRATGVSPSTSAGTTTTLLTPQQLRQAANPLANLPNNISVKITSAKAKAAAAAAATSSGSQTQSQQPQTLQVQQAPQQSHPPLLINSSTPVILASSPSAQRAKALALPSSSTSATTTTTIPSQAIKTMPLSQLKTATNSGPVIISQTIIQPAKRAQQQAGTSSAAAASQQQQQQQSQQQLLHQQIQQQTQQQAQLPQQPQQQQTQYILATPQQQPQQIQQQQQQQQPILPTLTSFSHSRPMPQTTTLYQATTPSGSGQTPTKILLKTSGSSSVVMTPLRQAQPQQATAVVSSNPPPLVATSAAVVSPGQTTLNIQNVQLPNRPVTIQPASQAAQQQHMQAQLQQQQPHPQHTIVANTTATQQPKLSQVLMQPTAAVGTSGVSALNVSPTSGKNKTIILTQKGVILRNIGGDMYQQIPISNVGNMQGLGGTTLMTTTAGPPSLVKTTPSSGVQLQQQQSGKQILPTLIPTSSLGGQHVIVQQQQPTNVIGNSQQQTIIRPVMTNVGGGLTTLPQGLTLIQRPGQQPQLVQVQAAPGSTQRTIITQSNTAAAASQQQPRQQQQQILVQHKPAPTLQQRLVTSTTSGGQGQQGNPNAGLPRTVQVQVQAQQQQQPQQQQATQQQSQQAPQRRGLSLSNEHVHKAHEMFRKANRVSRPDKALILGFMAGLRENPRPNNENVLVIKLGETEEKVQQDNGHTALCLVESHIRLDYNTGEWKTFQNYRLQDQSAAS.

One can recognise an HDAg domain in the interval 89-254 (WVSMLAETMK…SRTPAGRKDG (166 aa)). Residues 128 to 191 (RKLVTKHSDL…LHKSADAQSS (64 aa)) form an NELF-C/D-binding region. Disordered regions lie at residues 185-256 (SADA…DGGI), 269-333 (AAAK…TSAN), 343-362 (QQLNQSAGSLEEPQDDEMSG), 387-430 (STSV…SFNH), 484-509 (IRSSPQKRQNNGATTSAGTTTTTVGN), 578-607 (TSSGSQTQSQQPQTLQVQQAPQQSHPPLLI), 852-872 (SQAAQQQHMQAQLQQQQPHPQ), and 1099-1154 (LVTS…RGLS). The segment at 192–254 (LKKASAPTIP…SRTPAGRKDG (63 aa)) is RNAPII-binding. Over residues 277–289 (EQQLEEQQKKQEQ) the composition is skewed to basic and acidic residues. The segment covering 290-306 (KQQQAAAAAAAAATAAA) has biased composition (low complexity). Residues 309–318 (AGDSSPTDAA) show a composition bias toward polar residues. Composition is skewed to low complexity over residues 417 to 426 (NNNNNNNNNN), 493 to 509 (NNGATTSAGTTTTTVGN), and 578 to 600 (TSSGSQTQSQQPQTLQVQQAPQQ). A compositionally biased stretch (low complexity) spans 1119-1151 (PRTVQVQVQAQQQQQPQQQQATQQQSQQAPQRR).

It belongs to the NELF-A family. Component of the NELF complex. Interacts with Clamp.

It is found in the nucleus. Its subcellular location is the chromosome. Its function is as follows. Essential component of the NELF complex, a complex that negatively regulates the elongation of transcription by RNA polymerase II. Has an essential role in postembryonic development. In Drosophila melanogaster (Fruit fly), this protein is Negative elongation factor A (Nelf-A).